The chain runs to 415 residues: tRNA (cytosine(38)-C(5))-methyltransferase (415 aa).

The 393-residue stretch at 4-396 folds into the SAM-dependent MTase C5-type domain; it reads LRVLELYSGI…TVLCEGFGNA (393 aa). Residues 13-15, D34, 57-58, and S76 each bind S-adenosyl-L-methionine; these read IGG and IE. Residue C79 is part of the active site. Position 376 (S376) interacts with S-adenosyl-L-methionine.

This sequence belongs to the class I-like SAM-binding methyltransferase superfamily. C5-methyltransferase family. As to expression, highly expressed in thymus, testis, and at much lower levels in spleen, lung, brain, heart, kidney, liver, skeletal muscle and embryonic stem cells.

It localises to the cytoplasm. It carries out the reaction cytidine(38) in tRNA + S-adenosyl-L-methionine = 5-methylcytidine(38) in tRNA + S-adenosyl-L-homocysteine + H(+). Specifically methylates cytosine 38 in the anticodon loop of tRNA(Asp). Has higher activity on tRNA(Asp) modified with queuosine at position 34. The protein is tRNA (cytosine(38)-C(5))-methyltransferase (Trdmt1) of Mus musculus (Mouse).